Reading from the N-terminus, the 424-residue chain is UDP-N-acetylglucosamine 1-carboxyvinyltransferase (424 aa).

Position 22–23 (22–23 (KN)) interacts with phosphoenolpyruvate. Arg-95 is a UDP-N-acetyl-alpha-D-glucosamine binding site. Catalysis depends on Cys-119, which acts as the Proton donor. A 2-(S-cysteinyl)pyruvic acid O-phosphothioketal modification is found at Cys-119. Residues 124-128 (RPVDQ), Asp-311, and Ile-333 each bind UDP-N-acetyl-alpha-D-glucosamine.

Belongs to the EPSP synthase family. MurA subfamily.

It localises to the cytoplasm. It carries out the reaction phosphoenolpyruvate + UDP-N-acetyl-alpha-D-glucosamine = UDP-N-acetyl-3-O-(1-carboxyvinyl)-alpha-D-glucosamine + phosphate. The protein operates within cell wall biogenesis; peptidoglycan biosynthesis. Functionally, cell wall formation. Adds enolpyruvyl to UDP-N-acetylglucosamine. The sequence is that of UDP-N-acetylglucosamine 1-carboxyvinyltransferase from Polaromonas naphthalenivorans (strain CJ2).